Consider the following 118-residue polypeptide: Large ribosomal subunit protein bL20 (118 aa).

It belongs to the bacterial ribosomal protein bL20 family.

Its function is as follows. Binds directly to 23S ribosomal RNA and is necessary for the in vitro assembly process of the 50S ribosomal subunit. It is not involved in the protein synthesizing functions of that subunit. This Buchnera aphidicola subsp. Acyrthosiphon pisum (strain 5A) protein is Large ribosomal subunit protein bL20.